A 303-amino-acid chain; its full sequence is UDP-N-acetylenolpyruvoylglucosamine reductase (303 aa).

Residues 27–217 (KVGGISQVFY…QTVRKLTQPI (191 aa)) enclose the FAD-binding PCMH-type domain. The active site involves Arg-175. The active-site Proton donor is Ser-224. Glu-294 is an active-site residue.

This sequence belongs to the MurB family. FAD is required as a cofactor.

Its subcellular location is the cytoplasm. It catalyses the reaction UDP-N-acetyl-alpha-D-muramate + NADP(+) = UDP-N-acetyl-3-O-(1-carboxyvinyl)-alpha-D-glucosamine + NADPH + H(+). Its pathway is cell wall biogenesis; peptidoglycan biosynthesis. Functionally, cell wall formation. The protein is UDP-N-acetylenolpyruvoylglucosamine reductase of Orientia tsutsugamushi (strain Ikeda) (Rickettsia tsutsugamushi).